The primary structure comprises 186 residues: ATP synthase subunit b' (186 aa).

A helical membrane pass occupies residues 39-59; that stretch reads IFWLLLALGAIYWLLKNIAIP.

It belongs to the ATPase B chain family. F-type ATPases have 2 components, F(1) - the catalytic core - and F(0) - the membrane proton channel. F(1) has five subunits: alpha(3), beta(3), gamma(1), delta(1), epsilon(1). F(0) has four main subunits: a(1), b(1), b'(1) and c(10-14). The alpha and beta chains form an alternating ring which encloses part of the gamma chain. F(1) is attached to F(0) by a central stalk formed by the gamma and epsilon chains, while a peripheral stalk is formed by the delta, b and b' chains.

Its subcellular location is the cellular chromatophore membrane. Functionally, f(1)F(0) ATP synthase produces ATP from ADP in the presence of a proton or sodium gradient. F-type ATPases consist of two structural domains, F(1) containing the extramembraneous catalytic core and F(0) containing the membrane proton channel, linked together by a central stalk and a peripheral stalk. During catalysis, ATP synthesis in the catalytic domain of F(1) is coupled via a rotary mechanism of the central stalk subunits to proton translocation. In terms of biological role, component of the F(0) channel, it forms part of the peripheral stalk, linking F(1) to F(0). The b'-subunit is a diverged and duplicated form of b found in plants and photosynthetic bacteria. This chain is ATP synthase subunit b', found in Rhodobacter capsulatus (Rhodopseudomonas capsulata).